Here is a 610-residue protein sequence, read N- to C-terminus: ABC transporter ATP-binding protein/permease wht-3 (610 aa).

The ABC transporter domain maps to Val42–Lys277. Residue Gly74–Thr81 coordinates ATP. 5 helical membrane-spanning segments follow: residues Ala396–Met416, Leu446–Leu466, Ile477–Leu497, Leu503–Gly523, and Val584–Ile604.

This sequence belongs to the ABC transporter superfamily. ABCG family. Eye pigment precursor importer (TC 3.A.1.204) subfamily.

It is found in the membrane. Its function is as follows. Required for efficient RNA interference (RNAi) of pop-1 indicating a role in the germline development. This is ABC transporter ATP-binding protein/permease wht-3 (wht-3) from Caenorhabditis elegans.